We begin with the raw amino-acid sequence, 428 residues long: MSVKWEKLEGNEGVLTVEVDAEKVNEGLDAAFKKVVKNIAIPGFRKGKVPRVIFEKRFGVEALYQDALDILLPEAYAKAVEEAGIEPVDVPKIDIEQMEKGKSLIFTAKVTVKPEVKLGQYKGLEVEKMDDTVTDEDVENELKRLQENYAELVVKEDGKVENGDTAVIDFEGFVDGEPFEGGKAENYSLEIGSGTFIPGFEDQLIGMQAGEEKEIEVTFPEEYHAKELAGKPATFKVKVHEIKEKRLPALDDEFAKDVDDEVETLEQLKDKIRKRLEEMKKNEAEAALRDAVVEKAAENAEIDIPEVMVKNETDRMLREFDQRLQMQGLNLELYYQFSGQDEAALREQMKEDAEKRVRVALTIEAIAKAENIEVTEEEINEELEKMAKAYNLEVEKLKELLGNLDGVKEDLKWRKTIDFLVENSKVAA.

Residues 163-248 (GDTAVIDFEG…VHEIKEKRLP (86 aa)) form the PPIase FKBP-type domain.

Belongs to the FKBP-type PPIase family. Tig subfamily.

The protein localises to the cytoplasm. The catalysed reaction is [protein]-peptidylproline (omega=180) = [protein]-peptidylproline (omega=0). Involved in protein export. Acts as a chaperone by maintaining the newly synthesized protein in an open conformation. Functions as a peptidyl-prolyl cis-trans isomerase. This is Trigger factor from Geobacillus sp. (strain WCH70).